The chain runs to 470 residues: Cysteine--tRNA ligase (470 aa).

C30 serves as a coordination point for Zn(2+). Residues P32–N42 carry the 'HIGH' region motif. The Zn(2+) site is built by C211, H236, and E240. The 'KMSKS' region motif lies at K268 to S272. Residue K271 participates in ATP binding.

It belongs to the class-I aminoacyl-tRNA synthetase family. Monomer. The cofactor is Zn(2+).

The protein localises to the cytoplasm. The catalysed reaction is tRNA(Cys) + L-cysteine + ATP = L-cysteinyl-tRNA(Cys) + AMP + diphosphate. This is Cysteine--tRNA ligase from Fervidobacterium nodosum (strain ATCC 35602 / DSM 5306 / Rt17-B1).